The sequence spans 359 residues: Ni-sirohydrochlorin a,c-diamide reductive cyclase complex, component CfbD (359 aa).

This sequence belongs to the NifD/NifK/NifE/NifN family. As to quaternary structure, homodimer or monomer. The Ni-sirohydrochlorin a,c-diamide reductive cyclase complex is composed of a NifH homolog component CfbC and a NifD homolog component CfbD. [4Fe-4S] cluster is required as a cofactor.

The enzyme catalyses Ni-sirohydrochlorin a,c-diamide + 3 AH2 + ATP + H2O = 15,17(3)-seco-F430-17(3)-acid + 3 A + ADP + phosphate. Its function is as follows. Involved in the biosynthesis of the unique nickel-containing tetrapyrrole coenzyme F430, the prosthetic group of methyl-coenzyme M reductase (MCR), which plays a key role in methanogenesis and anaerobic methane oxidation. Catalyzes both the six-electron reduction of the tetrahydroporphyrin ring system and the gamma-lactamization of the c-acetamide side chain of Ni-sirohydrochlorin a,c-diamide to yield 15,17(3)-seco-F430-17(3)-acid (seco-F430), the last intermediate in the biosynthesis of the coenzyme F430. The chain is Ni-sirohydrochlorin a,c-diamide reductive cyclase complex, component CfbD from Methanothermobacter thermautotrophicus (strain ATCC 29096 / DSM 1053 / JCM 10044 / NBRC 100330 / Delta H) (Methanobacterium thermoautotrophicum).